The following is a 692-amino-acid chain: MAREFSLENTRNIGIMAHIDAGKTTATERILYYTGRIHKIGETHEGASQMDWMEQEQERGITITSAATTAQWKGHRVNIIDTPGHVDFTVEVERSLRVLDGAVAVLDAQSGVEPQTETVWRQATTYGVPRIVFVNKMDKIGADFLYSVGTIHDRLQANAHPIQLPIGAEDEFNGIIDLVEECAYMYGNDLGTDIQRVEIPEEHKELAEEYRGKLIEAVAELDEEMMMKYLEGEEITVEELKAGIRKATTSVEFFPVICGSAFKNKGVQILLDAVIDYLPSPLDVPAIKGTLPDTDEEVERKSSDEEPFSALAFKIMTDPYVGKLTFFRVYSGVLNSGSYVKNSTKGKRERVGRILQMHANSREEISTVYAGDIAAAVGLKDTTTGDTLCDEKSLVILESMEFPEPVISVAIEPKSKADQDKMGTALSKLSEEDPTFRAHTDQETGQTIIAGMGELHLDIIVDRMRREFKVEANVGAPQVAYRETFRSAAKVEGKFARQSGGRGQFGHVWIEFEPNEEGKGFEFENKIVGGVVPREYIPAVGAGLEDALKNGVLAGYPVVDIKAALVDGSYHDVDSSEMAFKIAASMALKAAVSKCNPVILEPMMKVEVVIPEEYMGDIMGDVTSRRGRVEGMEARGNAQVVRAMVPLSEMFGYATSLRSNTQGRGTFSMVFDHYEEVPKSVSEEIIKKNKGE.

Residues 8-282 (ENTRNIGIMA…AVIDYLPSPL (275 aa)) enclose the tr-type G domain. GTP-binding positions include 17–24 (AHIDAGKT), 81–85 (DTPGH), and 135–138 (NKMD).

It belongs to the TRAFAC class translation factor GTPase superfamily. Classic translation factor GTPase family. EF-G/EF-2 subfamily.

The protein localises to the cytoplasm. Functionally, catalyzes the GTP-dependent ribosomal translocation step during translation elongation. During this step, the ribosome changes from the pre-translocational (PRE) to the post-translocational (POST) state as the newly formed A-site-bound peptidyl-tRNA and P-site-bound deacylated tRNA move to the P and E sites, respectively. Catalyzes the coordinated movement of the two tRNA molecules, the mRNA and conformational changes in the ribosome. The chain is Elongation factor G from Bacillus cereus (strain Q1).